Reading from the N-terminus, the 129-residue chain is Large ribosomal subunit protein bL17 (129 aa).

Belongs to the bacterial ribosomal protein bL17 family. As to quaternary structure, part of the 50S ribosomal subunit. Contacts protein L32.

The polypeptide is Large ribosomal subunit protein bL17 (Acidovorax ebreus (strain TPSY) (Diaphorobacter sp. (strain TPSY))).